The following is a 262-amino-acid chain: Spindlin-1 (262 aa).

The segment at 1 to 49 (MKTPFGKTPGQRSRADAGHAGVSANMMKKRTSHKKHRTSVGPSKPVSQP) is disordered. Glycyl lysine isopeptide (Lys-Gly) (interchain with G-Cter in SUMO2) cross-links involve residues K7 and K28. Residues 27-38 (MKKRTSHKKHRT) show a composition bias toward basic residues. K44 is modified (N6-acetyllysine; alternate). A Glycyl lysine isopeptide (Lys-Gly) (interchain with G-Cter in SUMO2); alternate cross-link involves residue K44. A tudor-like domain 1 region spans residues 53–116 (IVGCRIQHGW…RVSALEVLPD (64 aa)). The histone H3K4me3 and H3R8me2a binding stretch occupies residues 93–98 (GFDCVY). 2 positions are modified to phosphoserine; by AURKA: S109 and S124. The segment at 132-193 (MIGKAVEHMF…DYKEGDLRIM (62 aa)) is tudor-like domain 2. A region of interest (histone H3K4me3 and H3R8me2a binding) is located at residue E142. S199 bears the Phosphoserine mark. Residues 213–262 (LVGKQVEYAKEDGSKRTGMVIHQVEAKPSVYFIKFDDDFHIYVYDLVKTS) are tudor-like domain 3. The histone H3K4me3 and H3R8me2a binding stretch occupies residues 250–252 (DFH).

This sequence belongs to the SPIN/STSY family. As to quaternary structure, homodimer; may form higher-order oligomers. Interacts with TCF7L2/TCF4; the interaction is direct. Interacts with HABP4 and SERBP1. Interacts with SPINDOC; SPINDOC stabilizes SPIN1 and enhances its association with bivalent H3K4me3K9me3 mark. Interacts with SPOCD1; promoting recruitment of PIWIL4 and SPOCD1 to transposons. In terms of processing, phosphorylated during oocyte meiotic maturation.

It is found in the nucleus. The protein localises to the nucleolus. In terms of biological role, chromatin reader that specifically recognizes and binds histone H3 both trimethylated at 'Lys-4' and 'Lys-9' (H3K4me3K9me3) and is involved in piRNA-mediated retrotransposon silencing during spermatogenesis. Plays a key role in the initiation of the PIWIL4-piRNA pathway, a pathway that directs transposon DNA methylation and silencing in the male embryonic germ cells, by promoting recruitment of DNA methylation machinery to transposons: binds young, but not old, LINE1 transposons, which are specifically marked with H3K4me3K9me3, and promotes the recruitment of PIWIL4 and SPOCD1 to transposons, leading to piRNA-directed DNA methylation. Also recognizes and binds histone H3 both trimethylated at 'Lys-4' and asymmetrically dimethylated at 'Arg-8' (H3K4me3 and H3R8me2a) and acts as an activator of Wnt signaling pathway downstream of PRMT2. Overexpression induces metaphase arrest and chromosomal instability. Overexpression induces metaphase arrest and chromosomal instability. Localizes to active rDNA loci and promotes the expression of rRNA genes. May play a role in cell-cycle regulation during the transition from gamete to embryo. Involved in oocyte meiotic resumption, a process that takes place before ovulation to resume meiosis of oocytes blocked in prophase I: may act by regulating maternal transcripts to control meiotic resumption. The protein is Spindlin-1 (Spin1) of Rattus norvegicus (Rat).